A 466-amino-acid polypeptide reads, in one-letter code: Cysteine--tRNA ligase (466 aa).

C28 is a Zn(2+) binding site. Positions 30–40 (PTVYNYIHIGN) match the 'HIGH' region motif. Residues C208, H233, and E237 each coordinate Zn(2+). Positions 265 to 269 (KMSKS) match the 'KMSKS' region motif. K268 serves as a coordination point for ATP. S269 is subject to Phosphoserine.

This sequence belongs to the class-I aminoacyl-tRNA synthetase family. In terms of assembly, monomer. Zn(2+) serves as cofactor.

It localises to the cytoplasm. It catalyses the reaction tRNA(Cys) + L-cysteine + ATP = L-cysteinyl-tRNA(Cys) + AMP + diphosphate. This chain is Cysteine--tRNA ligase, found in Shouchella clausii (strain KSM-K16) (Alkalihalobacillus clausii).